A 183-amino-acid polypeptide reads, in one-letter code: UPF0398 protein MCCL_1095 (183 aa).

Belongs to the UPF0398 family.

This Macrococcus caseolyticus (strain JCSC5402) (Macrococcoides caseolyticum) protein is UPF0398 protein MCCL_1095.